The primary structure comprises 315 residues: Putative methyltransferase SPBC8D2.16c (315 aa).

The protein belongs to the class IV-like SAM-binding methyltransferase superfamily.

It is found in the cytoplasm. It localises to the nucleus. This Schizosaccharomyces pombe (strain 972 / ATCC 24843) (Fission yeast) protein is Putative methyltransferase SPBC8D2.16c.